The primary structure comprises 728 residues: Probable LRR receptor-like serine/threonine-protein kinase At1g14390 (728 aa).

Residues 1-27 (MHSSSKSQAFSLTFLLFLFLLPSVSES) form the signal peptide. Residues 28-356 (QLISSESRTL…EEDTGIELGL (329 aa)) are Extracellular-facing. N55 and N85 each carry an N-linked (GlcNAc...) asparagine glycan. 9 LRR repeats span residues 74 to 96 (NGHV…RFSS), 106 to 130 (LSNL…IIRL), 131 to 155 (SSSL…ISSL), 157 to 178 (NLRS…LRGL), 179 to 202 (SNLQ…LASN), 204 to 224 (ITIS…IKKL), 225 to 248 (NKLQ…LLSL), 249 to 272 (PSLQ…SLCN), and 274 to 295 (KLRI…CFSS). 2 N-linked (GlcNAc...) asparagine glycosylation sites follow: N138 and N169. N210 carries N-linked (GlcNAc...) asparagine glycosylation. Residues N253 and N267 are each glycosylated (N-linked (GlcNAc...) asparagine). A helical transmembrane segment spans residues 357–377 (VIGIIIGVILVSAVLAGLVLV). At 378 to 728 (RMRKSRSKEE…ENLGLGGSEL (351 aa)) the chain is on the cytoplasmic side. The 289-residue stretch at 421–709 (TMRSAVIGLS…DVVWNLQYTI (289 aa)) folds into the Protein kinase domain.

The protein belongs to the protein kinase superfamily. Ser/Thr protein kinase family.

The protein localises to the membrane. It carries out the reaction L-seryl-[protein] + ATP = O-phospho-L-seryl-[protein] + ADP + H(+). The catalysed reaction is L-threonyl-[protein] + ATP = O-phospho-L-threonyl-[protein] + ADP + H(+). The protein is Probable LRR receptor-like serine/threonine-protein kinase At1g14390 of Arabidopsis thaliana (Mouse-ear cress).